Consider the following 407-residue polypeptide: Arginine biosynthesis bifunctional protein ArgJ (407 aa).

Residues Thr-154, Lys-180, Thr-191, Glu-278, Asn-402, and Ser-407 each coordinate substrate. The active-site Nucleophile is the Thr-191.

The protein belongs to the ArgJ family. Heterotetramer of two alpha and two beta chains.

The protein localises to the cytoplasm. The enzyme catalyses N(2)-acetyl-L-ornithine + L-glutamate = N-acetyl-L-glutamate + L-ornithine. The catalysed reaction is L-glutamate + acetyl-CoA = N-acetyl-L-glutamate + CoA + H(+). The protein operates within amino-acid biosynthesis; L-arginine biosynthesis; L-ornithine and N-acetyl-L-glutamate from L-glutamate and N(2)-acetyl-L-ornithine (cyclic): step 1/1. It participates in amino-acid biosynthesis; L-arginine biosynthesis; N(2)-acetyl-L-ornithine from L-glutamate: step 1/4. Its function is as follows. Catalyzes two activities which are involved in the cyclic version of arginine biosynthesis: the synthesis of N-acetylglutamate from glutamate and acetyl-CoA as the acetyl donor, and of ornithine by transacetylation between N(2)-acetylornithine and glutamate. The polypeptide is Arginine biosynthesis bifunctional protein ArgJ (Psychrobacter arcticus (strain DSM 17307 / VKM B-2377 / 273-4)).